The following is a 130-amino-acid chain: Small ribosomal subunit protein uS8 (130 aa).

This sequence belongs to the universal ribosomal protein uS8 family. As to quaternary structure, part of the 30S ribosomal subunit. Contacts proteins S5 and S12.

Its function is as follows. One of the primary rRNA binding proteins, it binds directly to 16S rRNA central domain where it helps coordinate assembly of the platform of the 30S subunit. The polypeptide is Small ribosomal subunit protein uS8 (Pseudomonas fluorescens (strain SBW25)).